Consider the following 101-residue polypeptide: Small ribosomal subunit protein uS14 (101 aa).

It belongs to the universal ribosomal protein uS14 family. As to quaternary structure, part of the 30S ribosomal subunit. Contacts proteins S3 and S10.

Functionally, binds 16S rRNA, required for the assembly of 30S particles and may also be responsible for determining the conformation of the 16S rRNA at the A site. This chain is Small ribosomal subunit protein uS14, found in Paenarthrobacter aurescens (strain TC1).